The primary structure comprises 471 residues: E3 SUMO-protein ligase EGR2 (471 aa).

The segment covering 127 to 143 (PASTTASSNVTSASPNP) has biased composition (low complexity). The segment at 127–177 (PASTTASSNVTSASPNPLATGPLGVCTMSQTQPDLDHLYSPPPPPPYSGCA) is disordered. K246 carries the N6-acetyllysine; by EP300 modification. 2 disordered regions span residues 273–301 (GGPS…AAAA) and 313–336 (RPIL…RPYP). A compositionally biased stretch (gly residues) spans 280-289 (TGPGASGGSE). C2H2-type zinc fingers lie at residues 335–359 (YPCP…IRIH), 365–387 (FQCR…IRTH), and 393–415 (FACD…TKIH). A disordered region spans residues 406–471 (DERKRHTKIH…GPCSSRTRTP (66 aa)). Over residues 410–420 (RHTKIHLRQKE) the composition is skewed to basic residues. A compositionally biased stretch (low complexity) spans 424–437 (SAPSSSVPAASTAS).

The protein belongs to the EGR C2H2-type zinc-finger protein family. Interacts with HCFC1. Interacts with WWP2. Interacts with UBC9. Interacts with CITED1. Interacts (via phosphorylated form) with SFN. Post-translationally, ubiquitinated by WWP2 leading to proteasomal degradation. Acetylated at Lys-246. May be deacetylated by HDAC6, HDAC10 or SIRT1.

Its subcellular location is the nucleus. Its pathway is protein modification; protein sumoylation. In terms of biological role, sequence-specific DNA-binding transcription factor. Plays a role in hindbrain segmentation by regulating the expression of a subset of homeobox containing genes and in Schwann cell myelination by regulating the expression of genes involved in the formation and maintenance of myelin. Binds to two EGR2-consensus sites EGR2A (5'-CTGTAGGAG-3') and EGR2B (5'-ATGTAGGTG-3') in the HOXB3 enhancer and promotes HOXB3 transcriptional activation. Binds to specific DNA sites located in the promoter region of HOXA4, HOXB2 and ERBB2. Regulates hindbrain segmentation by controlling the expression of Hox genes, such as HOXA4, HOXB3 and HOXB2, and thereby specifying odd and even rhombomeres. Promotes the expression of HOXB3 in the rhombomere r5 in the hindbrain. Regulates myelination in the peripheral nervous system after birth, possibly by regulating the expression of myelin proteins, such as MPZ, and by promoting the differentiation of Schwann cells. Involved in the development of the jaw openener musculature, probably by playing a role in its innervation through trigeminal motor neurons. May play a role in adipogenesis, possibly by regulating the expression of CEBPB. Its function is as follows. E3 SUMO-protein ligase helping SUMO1 conjugation to its coregulators NAB1 and NAB2, whose sumoylation down-regulates EGR2 transcriptional activity. In Sus scrofa (Pig), this protein is E3 SUMO-protein ligase EGR2 (EGR2).